The primary structure comprises 443 residues: POU domain, class 3, transcription factor 3-B (443 aa).

Disordered regions lie at residues 21-40 (IVHSDSGGGMQQGSAAVTSV), 100-150 (SPWS…AGAW), and 182-244 (NGML…PTSD). Over residues 101-121 (PWSSSPVGMTGSPQQQDVKNN) the composition is skewed to polar residues. Residues 210-225 (SHHHHHHHQHQHHQQA) are compositionally biased toward basic residues. The region spanning 238–312 (EDTPTSDDLE…LLNKWLEEAD (75 aa)) is the POU-specific domain. A Phosphoserine modification is found at S317. A DNA-binding region (homeobox) is located at residues 330–389 (KRKKRTSIEVSVKGALESHFLKCPKPSAQEITSLADNLQLEKEVVRVWFCNRRQKEKRMT).

It belongs to the POU transcription factor family. Class-3 subfamily. As to expression, predominantly expressed in the central nervous system.

It localises to the nucleus. In terms of biological role, transcription factor that may play important roles in patterning the embryonic brain. This Danio rerio (Zebrafish) protein is POU domain, class 3, transcription factor 3-B (pou3f3b).